A 1183-amino-acid chain; its full sequence is DNA-directed RNA polymerase subunit beta (1183 aa).

The tract at residues 1155–1183 (ADVDEDDVNEHKVNIQQSSIPESQKETTD) is disordered.

It belongs to the RNA polymerase beta chain family. In terms of assembly, the RNAP catalytic core consists of 2 alpha, 1 beta, 1 beta' and 1 omega subunit. When a sigma factor is associated with the core the holoenzyme is formed, which can initiate transcription.

It carries out the reaction RNA(n) + a ribonucleoside 5'-triphosphate = RNA(n+1) + diphosphate. In terms of biological role, DNA-dependent RNA polymerase catalyzes the transcription of DNA into RNA using the four ribonucleoside triphosphates as substrates. The protein is DNA-directed RNA polymerase subunit beta of Staphylococcus carnosus (strain TM300).